The primary structure comprises 119 residues: Large ribosomal subunit protein uL18 (119 aa).

Belongs to the universal ribosomal protein uL18 family. In terms of assembly, part of the 50S ribosomal subunit; part of the 5S rRNA/L5/L18/L25 subcomplex. Contacts the 5S and 23S rRNAs.

Functionally, this is one of the proteins that bind and probably mediate the attachment of the 5S RNA into the large ribosomal subunit, where it forms part of the central protuberance. The polypeptide is Large ribosomal subunit protein uL18 (Clostridium botulinum (strain Okra / Type B1)).